The chain runs to 377 residues: DNA replication and repair protein RecF (377 aa).

An ATP-binding site is contributed by 30-37 (GQNAQGKS).

It belongs to the RecF family.

It localises to the cytoplasm. The RecF protein is involved in DNA metabolism; it is required for DNA replication and normal SOS inducibility. RecF binds preferentially to single-stranded, linear DNA. It also seems to bind ATP. This Cyanothece sp. (strain PCC 7425 / ATCC 29141) protein is DNA replication and repair protein RecF.